A 306-amino-acid chain; its full sequence is Malate dehydrogenase (306 aa).

Residues 8 to 13 and D33 contribute to the NAD(+) site; that span reads GVGRVG. Substrate contacts are provided by R82 and R88. Residues N95 and 118–120 contribute to the NAD(+) site; that span reads VAN. Residues N120 and R148 each coordinate substrate. The active-site Proton acceptor is the H172.

This sequence belongs to the LDH/MDH superfamily.

The enzyme catalyses (S)-malate + NAD(+) = oxaloacetate + NADH + H(+). In terms of biological role, catalyzes the reversible oxidation of malate to oxaloacetate. The protein is Malate dehydrogenase (mdh) of Sulfolobus acidocaldarius (strain ATCC 33909 / DSM 639 / JCM 8929 / NBRC 15157 / NCIMB 11770).